We begin with the raw amino-acid sequence, 684 residues long: Soluble guanylate cyclase gcy-32 (684 aa).

Histidine 105 provides a ligand contact to heme. A coiled-coil region spans residues aspartate 396 to leucine 432. Residues threonine 454–glutamate 582 enclose the Guanylate cyclase domain. 2 residues coordinate Mg(2+): aspartate 459 and aspartate 503.

This sequence belongs to the adenylyl cyclase class-4/guanylyl cyclase family. Heterodimer; with other soluble guanylate cyclases. Heme serves as cofactor. In terms of tissue distribution, expressed in a small number of neurons, corresponding to URX, AQR and PQR neurons.

It localises to the cytoplasm. It catalyses the reaction GTP = 3',5'-cyclic GMP + diphosphate. Its activity is regulated as follows. May be regulated by molecular oxygen. Probably not activated by nitric oxide (NO). Functionally, synthesizes cyclic GMP (cGMP) from GTP. Influences aerotaxis responses, aggregation and bordering behaviors (gathering around the edge of a bacterial lawn) in combination with other soluble guanylate cyclases. The chain is Soluble guanylate cyclase gcy-32 (gcy-32) from Caenorhabditis elegans.